The following is a 355-amino-acid chain: Receptor-like serine/threonine-protein kinase At1g78530 (355 aa).

The Extracellular segment spans residues 1 to 8 (MANAKETT). Residues 9–29 (FYITISVVAFVIGKIVIALLF) traverse the membrane as a helical segment. Residues 30 to 355 (YKRWKRKHTI…YIKLSTRSSF (326 aa)) are Cytoplasmic-facing. Residues 75 to 347 (LSNKDILGSG…TEVVKLLEYI (273 aa)) enclose the Protein kinase domain. ATP contacts are provided by residues 81-89 (LGSGGFGTV) and K103. Y148 is modified (phosphotyrosine). Catalysis depends on D197, which acts as the Proton acceptor. Phosphoserine occurs at positions 201 and 230. T231 and T236 each carry phosphothreonine. Y244 bears the Phosphotyrosine mark.

Belongs to the protein kinase superfamily. Ser/Thr protein kinase family.

It is found in the cell membrane. It catalyses the reaction L-seryl-[protein] + ATP = O-phospho-L-seryl-[protein] + ADP + H(+). The enzyme catalyses L-threonyl-[protein] + ATP = O-phospho-L-threonyl-[protein] + ADP + H(+). This Arabidopsis thaliana (Mouse-ear cress) protein is Receptor-like serine/threonine-protein kinase At1g78530.